A 423-amino-acid polypeptide reads, in one-letter code: MATQALEDITERLLIRSQEAILQLDLWIQRQQRSSICQTTDQESLDKLSQQYNQYMSQLNSLYVRSESVRDKLSKEQQRRLITEDNEHQRIEDLVREFQDITLRLNELATVPNEAPNDSPQSQSTRSSLGSFQPRPLKIIERQRLCMVTPSKPPKKSVGFNPINEVDCPSKTNSLPCSPKKQPARNRTLRAAKSHDTGLNKSKKPSSSDTYESFFKNRQRLSLTFFDEMDDEDFDSDQDTIILPNISTPPHVGVTAKGAEFEPLRRYNSHESILSNKPAPSKSLNLGSFSASFFRPSNPTFGTSISNVQVNCHPTVAATMAPSRNGPRISSSKALLSSFIARSDTHTVKENNTNLKHASFMDKFNSSLSTISESFQSKRGRKNKGMNEERISNHNVAQEQKNNMDISVSIEELQDALNTELLF.

Ala-2 is subject to N-acetylalanine. The interval 109 to 134 is disordered; that stretch reads ATVPNEAPNDSPQSQSTRSSLGSFQP. Residues 110 to 170 are MYO2-binding; that stretch reads TVPNEAPNDS…NPINEVDCPS (61 aa). Positions 116 to 131 are enriched in polar residues; sequence PNDSPQSQSTRSSLGS. A Phosphoserine modification is found at Ser-119. A Phosphothreonine modification is found at Thr-149. The disordered stretch occupies residues 150–211; it reads PSKPPKKSVG…SKKPSSSDTY (62 aa). Phosphoserine is present on Ser-178. A compositionally biased stretch (basic residues) spans 182-192; it reads QPARNRTLRAA. A compositionally biased stretch (polar residues) spans 199–211; the sequence is LNKSKKPSSSDTY. Thr-248 is modified (phosphothreonine). Phosphoserine is present on Ser-269. Positions 290-380 are VAC8-binding; it reads SASFFRPSNP…ISESFQSKRG (91 aa).

Belongs to the VAC17 family. Interacts with MYO2 and VAC8. Interacts with ATG18.

It is found in the vacuole membrane. Functionally, vacuole-specific MYO2 receptor required for vacuole inheritance. Binds simultaneously to MYO2 and to VAC8, a vacuolar membrane protein, forming a transport complex which moves the attached vacuole membrane along actin cables into the bud. Once the vacuole arrives in the bud, VAC17 is degraded, depositing the vacuole in its correct location. The protein is vacuole-related protein 17 (VAC17) of Saccharomyces cerevisiae (strain ATCC 204508 / S288c) (Baker's yeast).